Here is a 353-residue protein sequence, read N- to C-terminus: GTPase Obg (353 aa).

The 159-residue stretch at 1-159 (MKFLDEAKVY…RWIWLRLKLI (159 aa)) folds into the Obg domain. Residues 160 to 327 (ADAGLVGLPN…VLRALVAVIG (168 aa)) form the OBG-type G domain. GTP contacts are provided by residues 166–173 (GLPNAGKS), 191–195 (FTTLH), 212–215 (DIPG), 279–282 (NKID), and 308–310 (SGV). Mg(2+)-binding residues include Ser173 and Thr193.

The protein belongs to the TRAFAC class OBG-HflX-like GTPase superfamily. OBG GTPase family. Monomer. The cofactor is Mg(2+).

It localises to the cytoplasm. Functionally, an essential GTPase which binds GTP, GDP and possibly (p)ppGpp with moderate affinity, with high nucleotide exchange rates and a fairly low GTP hydrolysis rate. Plays a role in control of the cell cycle, stress response, ribosome biogenesis and in those bacteria that undergo differentiation, in morphogenesis control. The polypeptide is GTPase Obg (Rhodopseudomonas palustris (strain TIE-1)).